Here is a 492-residue protein sequence, read N- to C-terminus: MSNRDSSEHGDSSNKIASNECNEATKLGFNFTQLWSQITTTYSLIDRNDSNMFNRDERVESEQEKKSVVILGKKYDDISVDDGVIEQDIYSKIWLTYRTGFEPIAKCLDGPQPLSFVQSMVFNRNPISSTFNNFHGLLDNDNFTTDVGWGCMIRTSQALLANTYQLLFLGRGFSYGRDRSPRHDEIIDMFMDEPRAPFSLHNFIKVASESPLKVKPGQWFGPNAASLSIKRLCDNVYESNGTGRVKVVISESSNLYDDIITQMFTTLNPVPDAILVLLPVRLGIDKVNPLYHASVLELLALRQSVGIAGGKPSSSFYFFGYKGNDLLYLDPHYPQFVRNKTSVYDTYHTNSYQKLSVDDMDPSMMIGILIKDINDYEDFKSSCTKSSNKILHFHPTSEKADRRGSLSEFKRKNSEFVCIESKDVQRREDFITIDNVSRDDLNNMEGFIDMADEFDSEIDQNNKDDNFDDDEPVNVSQTSIGEEYTSTAGSRP.

The Nucleophile role is filled by Cys-151. Catalysis depends on residues Asp-330 and His-332. The disordered stretch occupies residues 454 to 492 (FDSEIDQNNKDDNFDDDEPVNVSQTSIGEEYTSTAGSRP). A compositionally biased stretch (polar residues) spans 474 to 492 (NVSQTSIGEEYTSTAGSRP).

Belongs to the peptidase C54 family.

It is found in the cytoplasm. The protein localises to the nucleus. It localises to the preautophagosomal structure. It carries out the reaction [protein]-C-terminal L-amino acid-glycyl-phosphatidylethanolamide + H2O = [protein]-C-terminal L-amino acid-glycine + a 1,2-diacyl-sn-glycero-3-phosphoethanolamine. Cysteine protease that plays a key role in cytoplasm to vacuole transport (Cvt) and autophagy by mediating both proteolytic activation and delipidation of ATG8. Required for selective autophagic degradation of the nucleus (nucleophagy) as well as for mitophagy which contributes to regulate mitochondrial quantity and quality by eliminating the mitochondria to a basal level to fulfill cellular energy requirements and preventing excess ROS production. The protease activity is required for proteolytic activation of ATG8: cleaves the C-terminal amino acid of ATG8 to reveal a C-terminal glycine. ATG8 ubiquitin-like activity requires the exposure of the glycine at the C-terminus for its conjugation to phosphatidylethanolamine (PE) and its insertion to membranes, which is necessary for autophagy. The ATG8-PE conjugate mediates tethering between adjacent membranes and stimulates membrane hemifusion, leading to expansion of the autophagosomal membrane during autophagy. In addition to the protease activity, also catalyzes deconjugation of PE-conjugated forms of ATG8 during macroautophagy: ATG8 delipidation is required to release the protein from membranes, which facilitates multiple events during macroautophagy, and especially for efficient autophagosome biogenesis, the assembly of ATG9-containing tubulovesicular clusters into phagophores/autophagosomes, and for the disassembly of PAS-associated ATG components. ATG8 delipidation by ATG4 also recycles ATG8-PE generated on inappropriate membranes to maintain a reservoir of unlipidated ATG8 that is required for autophagosome formation at the PAS. The polypeptide is Probable cysteine protease ATG4 (ATG4) (Debaryomyces hansenii (strain ATCC 36239 / CBS 767 / BCRC 21394 / JCM 1990 / NBRC 0083 / IGC 2968) (Yeast)).